Here is a 1707-residue protein sequence, read N- to C-terminus: Histone-lysine N-methyltransferase SETD1A (1707 aa).

Positions 60–89 (LQDPRCHVRSKNRDFSLPVPKFKLDEFYIG) are interaction with WDR82. The region spanning 84–172 (DEFYIGQIPL…NIIHAQLDIK (89 aa)) is the RRM domain. 7 disordered regions span residues 194-308 (PTGG…YQDA), 331-363 (TAAT…RSSD), 381-486 (SYPP…AQHS), 506-655 (LASD…PPPH), 834-854 (AKPF…EKTK), 891-1251 (PSFK…GTEV), and 1264-1293 (ARRG…RPLL). The span at 239 to 277 (NGTPCSQDTSFSSSRQDTPSSFGQFTPQSSQGTPYTSRG) shows a compositional bias: polar residues. Low complexity-rich tracts occupy residues 278–295 (STPY…TSTS) and 331–357 (TAAT…SSSS). Pro residues predominate over residues 430–440 (SEAPPPEPPEP). Serine 459 and serine 464 each carry phosphoserine. Residues 459–473 (SPRPASPARSGSPAP) show a composition bias toward low complexity. The segment covering 474 to 486 (ETTNESVPFAQHS) has biased composition (polar residues). Phosphoserine is present on residues serine 508 and serine 565. The span at 568 to 578 (ANGQNQASPCS) shows a compositional bias: polar residues. 2 stretches are compositionally biased toward pro residues: residues 593–617 (SPPP…PPPY) and 624–655 (GYPP…PPPH). Residues 844 to 854 (QAKEEDKEKTK) show a composition bias toward basic and acidic residues. Serine 915 carries the phosphoserine modification. 2 stretches are compositionally biased toward acidic residues: residues 918 to 927 (AEEDEDDPEQ) and 976 to 992 (KDEE…DREE). Residues 993–1002 (AVDTTKKETE) show a composition bias toward basic and acidic residues. Residues 1003-1012 (VSDGEDEESD) are compositionally biased toward acidic residues. Over residues 1032–1060 (DSESSSSSSSSSSSSSSSSSSSSSSSSES) the composition is skewed to low complexity. Positions 1077–1094 (ASPPPREVPVPTPAPVEV) are enriched in pro residues. Serine 1103 carries the phosphoserine modification. The span at 1127–1145 (PSAPLRPPEPPAGPPAPAP) shows a compositional bias: pro residues. Residues 1275-1284 (EDSEATETSD) are compositionally biased toward acidic residues. Positions 1299–1303 (EHNYA) match the HCFC1-binding motif (HBM) motif. Disordered stretches follow at residues 1307-1417 (KPTP…AYEP) and 1472-1499 (NLTT…SEGY). Pro residues predominate over residues 1308 to 1323 (PTPPAPALRPPEPVPA). Residues 1360 to 1377 (EGEEEGEEEGEEEEEESS) are compositionally biased toward acidic residues. The segment covering 1390–1403 (RRRSLRSHARRRRP) has biased composition (basic residues). The segment covering 1404–1414 (PPPPPPPPPRA) has biased composition (pro residues). The interaction with CFP1 stretch occupies residues 1415-1450 (YEPRSEFEQMTILYDIWNSGLDSEDMSYLRLTYERL). The interaction with ASH2L, RBBP5 and WDR5 stretch occupies residues 1450 to 1537 (LLQQTSGADW…GTNRVLSERR (88 aa)). Residues 1492-1497 (GSARSE) carry the WDR5 interaction motif (WIN) motif. A RxxxRR motif motif is present at residues 1537-1542 (RSEQRR). Positions 1568–1685 (KKLRFGRSRI…VDEEITYDYK (118 aa)) constitute an SET domain. S-adenosyl-L-methionine is bound at residue tyrosine 1684. In terms of domain architecture, Post-SET spans 1691 to 1707 (NKIPCLCGTESCRGSLN).

It belongs to the class V-like SAM-binding methyltransferase superfamily. As to quaternary structure, component of the SET1A/COMPASS complex composed of the catalytic subunit SETD1A, WDR5, WDR82, RBBP5, ASH2L/ASH2, CXXC1/CFP1, HCFC1 and DPY30 homotrimer. Forms a core complex with the evolutionary conserved subcomplex WRAD composed of WDR5, RBBP5, ASH2L/ASH2 and DPY30 subunits; WRAD differentially stimulates the methyltransferase activity. Interacts with BOD1L1 (via COMPASS-Shg1 domain) at replication forks. Interacts with HCFC1. Interacts with ASH2/ASH2L. Interacts with CXXC1/CFP1. Interacts with RBBP5. Interacts (via N-terminal region) with WDR82; the interaction is direct. Interacts (via the RRM domain) with hyperphosphorylated C-terminal domain (CTD) of RNA polymerase II large subunit (POLR2A) only in the presence of WDR82. Binds specifically to CTD heptad repeats phosphorylated on 'Ser-5' of each heptad. Interacts with ZNF335. Interacts with SUPT6H. Interacts with NAP1L1. Interacts (via WIN motif) with WDR5.

It is found in the nucleus speckle. The protein localises to the chromosome. It localises to the cytoplasm. It carries out the reaction L-lysyl(4)-[histone H3] + S-adenosyl-L-methionine = N(6)-methyl-L-lysyl(4)-[histone H3] + S-adenosyl-L-homocysteine + H(+). The catalysed reaction is N(6)-methyl-L-lysyl(4)-[histone H3] + S-adenosyl-L-methionine = N(6),N(6)-dimethyl-L-lysyl(4)-[histone H3] + S-adenosyl-L-homocysteine + H(+). The enzyme catalyses N(6),N(6)-dimethyl-L-lysyl(4)-[histone H3] + S-adenosyl-L-methionine = N(6),N(6),N(6)-trimethyl-L-lysyl(4)-[histone H3] + S-adenosyl-L-homocysteine + H(+). Functionally, histone methyltransferase that catalyzes methyl group transfer from S-adenosyl-L-methionine to the epsilon-amino group of 'Lys-4' of histone H3 (H3K4) via a non-processive mechanism. Part of chromatin remodeling machinery, forms H3K4me1, H3K4me2 and H3K4me3 methylation marks at active chromatin sites where transcription and DNA repair take place. Responsible for H3K4me3 enriched promoters and transcriptional programming of inner mass stem cells and neuron progenitors during embryogenesis. Required for H3K4me1 mark at stalled replication forks. Mediates FANCD2-dependent nucleosome remodeling and RAD51 nucleofilaments stabilization at reversed forks, protecting them from nucleolytic degradation. Does not methylate 'Lys-4' of histone H3 if the neighboring 'Lys-9' residue is already methylated. Binds RNAs involved in RNA processing and the DNA damage response. The sequence is that of Histone-lysine N-methyltransferase SETD1A (SETD1A) from Homo sapiens (Human).